Reading from the N-terminus, the 457-residue chain is Biphenyl dioxygenase subunit alpha (457 aa).

Residues 58 to 174 (WLMLGHETHI…VETYKGLVFA (117 aa)) form the Rieske domain. Residues Cys-100, His-102, Cys-120, and His-123 each coordinate [2Fe-2S] cluster. Residues His-233 and His-239 each coordinate Fe cation.

This sequence belongs to the bacterial ring-hydroxylating dioxygenase alpha subunit family. In terms of assembly, heterohexamer consisting of three BphA subunits and three BphE subunits. A ferredoxin (BphF) and a ferredoxin reductase (BphG) must be present to obtain activity. The cofactor is [2Fe-2S] cluster. Requires Fe cation as cofactor.

The catalysed reaction is biphenyl + NADH + O2 + H(+) = (2R,3S)-3-phenylcyclohexa-3,5-diene-1,2-diol + NAD(+). Its pathway is xenobiotic degradation; biphenyl degradation; 2-hydroxy-2,4-pentadienoate and benzoate from biphenyl: step 1/4. This is Biphenyl dioxygenase subunit alpha (bphA) from Comamonas testosteroni (Pseudomonas testosteroni).